The primary structure comprises 510 residues: JmjC domain-containing histone demethylation protein 1 (510 aa).

Residues 2-53 (PNRCDFCTSSSTKDKQQWTQCDGCDRWVHDVCVSITDPVSYAKYHCPTCTKT) form a PHD-type zinc finger. Residues 216–365 (TLVRELDLVD…TQIDIAGIEV (150 aa)) form the JmjC domain. Thr255 contributes to the substrate binding site. His258 and Asp260 together coordinate Fe cation. Lys275 serves as a coordination point for substrate. His333 contributes to the Fe cation binding site. The disordered stretch occupies residues 475–510 (KGESKEKHKIESQLPEEKILQGSKLESKEEVQTENF). Positions 477-510 (ESKEKHKIESQLPEEKILQGSKLESKEEVQTENF) are enriched in basic and acidic residues.

Belongs to the JHDM1 histone demethylase family. Requires Fe(2+) as cofactor.

It localises to the nucleus. It carries out the reaction N(6),N(6)-dimethyl-L-lysyl(36)-[histone H3] + 2 2-oxoglutarate + 2 O2 = L-lysyl(36)-[histone H3] + 2 formaldehyde + 2 succinate + 2 CO2. In terms of biological role, histone demethylase that specifically demethylates 'Lys-36' of histone H3, thereby playing a central role in histone code. This Yarrowia lipolytica (strain CLIB 122 / E 150) (Yeast) protein is JmjC domain-containing histone demethylation protein 1 (JHD1).